Consider the following 594-residue polypeptide: DNA polymerase II small subunit (594 aa).

It belongs to the DNA polymerase delta/II small subunit family. As to quaternary structure, heterodimer of a large subunit and a small subunit.

The enzyme catalyses DNA(n) + a 2'-deoxyribonucleoside 5'-triphosphate = DNA(n+1) + diphosphate. It catalyses the reaction Exonucleolytic cleavage in the 3'- to 5'-direction to yield nucleoside 5'-phosphates.. In terms of biological role, possesses two activities: a DNA synthesis (polymerase) and an exonucleolytic activity that degrades single-stranded DNA in the 3' to 5' direction. Has a template-primer preference which is characteristic of a replicative DNA polymerase. This is DNA polymerase II small subunit (polB) from Methanocaldococcus jannaschii (strain ATCC 43067 / DSM 2661 / JAL-1 / JCM 10045 / NBRC 100440) (Methanococcus jannaschii).